The chain runs to 299 residues: tRNA pseudouridine synthase B (299 aa).

The Nucleophile role is filled by D49. Residues 241–299 (MPRVTVSGRAAARVLHGVAPAVRVEHPDGTTVAVVAANGALLALAEADGGGLRLRKVFG) form the PUA domain.

It belongs to the pseudouridine synthase TruB family. Type 1 subfamily.

It catalyses the reaction uridine(55) in tRNA = pseudouridine(55) in tRNA. In terms of biological role, responsible for synthesis of pseudouridine from uracil-55 in the psi GC loop of transfer RNAs. In Symbiobacterium thermophilum (strain DSM 24528 / JCM 14929 / IAM 14863 / T), this protein is tRNA pseudouridine synthase B.